The sequence spans 119 residues: Large ribosomal subunit protein bL20 (119 aa).

It belongs to the bacterial ribosomal protein bL20 family.

Functionally, binds directly to 23S ribosomal RNA and is necessary for the in vitro assembly process of the 50S ribosomal subunit. It is not involved in the protein synthesizing functions of that subunit. The protein is Large ribosomal subunit protein bL20 of Granulibacter bethesdensis (strain ATCC BAA-1260 / CGDNIH1).